The chain runs to 216 residues: ATP-dependent Clp protease proteolytic subunit (216 aa).

S120 (nucleophile) is an active-site residue. Residue H145 is part of the active site.

The protein belongs to the peptidase S14 family. In terms of assembly, fourteen ClpP subunits assemble into 2 heptameric rings which stack back to back to give a disk-like structure with a central cavity, resembling the structure of eukaryotic proteasomes.

The protein resides in the cytoplasm. It catalyses the reaction Hydrolysis of proteins to small peptides in the presence of ATP and magnesium. alpha-casein is the usual test substrate. In the absence of ATP, only oligopeptides shorter than five residues are hydrolyzed (such as succinyl-Leu-Tyr-|-NHMec, and Leu-Tyr-Leu-|-Tyr-Trp, in which cleavage of the -Tyr-|-Leu- and -Tyr-|-Trp bonds also occurs).. Cleaves peptides in various proteins in a process that requires ATP hydrolysis. Has a chymotrypsin-like activity. Plays a major role in the degradation of misfolded proteins. This is ATP-dependent Clp protease proteolytic subunit from Cupriavidus pinatubonensis (strain JMP 134 / LMG 1197) (Cupriavidus necator (strain JMP 134)).